The chain runs to 209 residues: Aspartate kinase-like protein lolA1 (209 aa).

The segment covering 1-11 has biased composition (basic and acidic residues); sequence MLDESPMRKGD. The segment at 1-27 is disordered; the sequence is MLDESPMRKGDSVSNDQSNPESNASVS. Polar residues predominate over residues 12–27; sequence SVSNDQSNPESNASVS.

This sequence belongs to the aspartokinase family.

It participates in alkaloid biosynthesis. Aspartokinase-like protein; part of the gene cluster that mediates the biosynthesis of loline alkaloids, potent insecticidal agents composed of a pyrrolizidine ring system and an uncommon ether bridge linking carbons 2 and 7. Lolines are structurally differentiated by the various modifications of the L-amino group and include norloline, loline, N-methylloline, N-acetylloline, N-acetylnorloline, and N-formylloline. The first committed step is the condensation of O-acetyl-L-homoserine (derived from L-aspartic acid) and L-proline, probably catalyzed by the gamma-type pyridoxal 5'-phosphate(PLP)-dependent enzyme lolC, to give the diamino diacid, NACPP. Ensuing cyclization, decarboxylation, and acetylation steps yield 1-exo-acetamidopyrrolizidine (AcAP). LolO is required for installation of the ether bridge upon the pathway intermediate, 1-exo-acetamidopyrrolizidine (AcAP). In sequential 2-oxoglutarate- and O(2)-consuming steps, lolO removes hydrogens from C2 and C7 of AcAP to form both carbon-oxygen bonds in N-acetylnorloline (NANL), the precursor to all other lolines. The enzymes lolD, lolE, lolF and lolT have also been proposed to be involved in the ether-bridge installation. Further processing of the exocyclic moiety of NANL by fungal N-acetamidase (LolN), methyltransferase (LolM), and cytochrome P450 (LolP) enzymes, with occasional involvement of a plant acetyltransferase, generates the other known lolines. LolN transforms NANL to norlonine which is monomethylated and dimethylated to respectively lonine and N-methyllonine (NML) by lolM. LolP catalyzes hydroxylation of the methyl group in N-methylloline (NML) and further oxygenation to N-formylloline (NFL). A plant acetyltransferase is responsible for the acetylation of loline to form N-acetylloline (NAL). LolA might interact with aspartate kinase to prevent feedback inhibition of its activity by these end products and thereby promote production of L-homoserine from L-aspartate. This Epichloe uncinata (Endophyte fungus) protein is Aspartate kinase-like protein lolA1.